The chain runs to 557 residues: Potassium-transporting ATPase potassium-binding subunit (557 aa).

Transmembrane regions (helical) follow at residues 6–26 (IQLL…GLGL), 59–79 (ALSL…ILFF), 127–147 (AGLT…LLAL), 172–192 (LYVL…FGVV), 247–267 (ISNF…VFLY), 278–298 (WAIF…VWTF), 363–383 (IVFG…LLTV), 410–430 (ILGI…SVSV), 475–495 (VMIA…VLVI), and 520–540 (FYIL…FPVL).

The protein belongs to the KdpA family. The system is composed of three essential subunits: KdpA, KdpB and KdpC.

The protein resides in the cell inner membrane. In terms of biological role, part of the high-affinity ATP-driven potassium transport (or Kdp) system, which catalyzes the hydrolysis of ATP coupled with the electrogenic transport of potassium into the cytoplasm. This subunit binds the periplasmic potassium ions and delivers the ions to the membrane domain of KdpB through an intramembrane tunnel. This chain is Potassium-transporting ATPase potassium-binding subunit, found in Leptospira interrogans serogroup Icterohaemorrhagiae serovar Lai (strain 56601).